The sequence spans 464 residues: NADH dehydrogenase [ubiquinone] flavoprotein 1, mitochondrial (464 aa).

Residues methionine 1–phenylalanine 20 constitute a mitochondrion transit peptide. Residue lysine 81 is modified to N6-acetyllysine; alternate. The residue at position 81 (lysine 81) is an N6-succinyllysine; alternate. Glycine 87 to glycine 96 serves as a coordination point for NADH. Lysine 104 is modified (N6-acetyllysine). Arginine 199 to threonine 247 is an FMN binding site. Residue arginine 257 is modified to Omega-N-methylarginine. An N6-acetyllysine modification is found at lysine 375. Positions 379, 382, 385, and 425 each coordinate [4Fe-4S] cluster.

Belongs to the complex I 51 kDa subunit family. In terms of assembly, core subunit of respiratory chain NADH dehydrogenase (Complex I) which is composed of 45 different subunits. This is a component of the flavoprotein-sulfur (FP) fragment of the enzyme. Interacts with RAB5IF. It depends on FMN as a cofactor. [4Fe-4S] cluster is required as a cofactor.

It localises to the mitochondrion inner membrane. The catalysed reaction is a ubiquinone + NADH + 5 H(+)(in) = a ubiquinol + NAD(+) + 4 H(+)(out). In terms of biological role, core subunit of the mitochondrial membrane respiratory chain NADH dehydrogenase (Complex I) which catalyzes electron transfer from NADH through the respiratory chain, using ubiquinone as an electron acceptor. Part of the peripheral arm of the enzyme, where the electrons from NADH are accepted by flavin mononucleotide (FMN) and then passed along a chain of iron-sulfur clusters by electron tunnelling to the final acceptor ubiquinone. Contains FMN, which is the initial electron acceptor as well as one iron-sulfur cluster. This is NADH dehydrogenase [ubiquinone] flavoprotein 1, mitochondrial from Homo sapiens (Human).